The following is a 321-amino-acid chain: Beta-ketoacyl-[acyl-carrier-protein] synthase III (321 aa).

Residues Cys-113 and His-248 contribute to the active site. An ACP-binding region spans residues 249–253; that stretch reads QANAR. Asn-278 is an active-site residue.

This sequence belongs to the thiolase-like superfamily. FabH family. As to quaternary structure, homodimer.

It is found in the cytoplasm. The catalysed reaction is malonyl-[ACP] + acetyl-CoA + H(+) = 3-oxobutanoyl-[ACP] + CO2 + CoA. It participates in lipid metabolism; fatty acid biosynthesis. Functionally, catalyzes the condensation reaction of fatty acid synthesis by the addition to an acyl acceptor of two carbons from malonyl-ACP. Catalyzes the first condensation reaction which initiates fatty acid synthesis and may therefore play a role in governing the total rate of fatty acid production. Possesses both acetoacetyl-ACP synthase and acetyl transacylase activities. Its substrate specificity determines the biosynthesis of branched-chain and/or straight-chain of fatty acids. The polypeptide is Beta-ketoacyl-[acyl-carrier-protein] synthase III (Erythrobacter litoralis (strain HTCC2594)).